A 564-amino-acid polypeptide reads, in one-letter code: Dihydroxy-acid dehydratase (564 aa).

Cysteine 50 contacts [2Fe-2S] cluster. A Mg(2+)-binding site is contributed by aspartate 82. Cysteine 123 serves as a coordination point for [2Fe-2S] cluster. Aspartate 124 and lysine 125 together coordinate Mg(2+). N6-carboxylysine is present on lysine 125. Residue cysteine 195 participates in [2Fe-2S] cluster binding. Residue glutamate 447 participates in Mg(2+) binding. Serine 473 serves as the catalytic Proton acceptor.

This sequence belongs to the IlvD/Edd family. As to quaternary structure, homodimer. Requires [2Fe-2S] cluster as cofactor. It depends on Mg(2+) as a cofactor.

It carries out the reaction (2R)-2,3-dihydroxy-3-methylbutanoate = 3-methyl-2-oxobutanoate + H2O. The enzyme catalyses (2R,3R)-2,3-dihydroxy-3-methylpentanoate = (S)-3-methyl-2-oxopentanoate + H2O. It participates in amino-acid biosynthesis; L-isoleucine biosynthesis; L-isoleucine from 2-oxobutanoate: step 3/4. Its pathway is amino-acid biosynthesis; L-valine biosynthesis; L-valine from pyruvate: step 3/4. Functionally, functions in the biosynthesis of branched-chain amino acids. Catalyzes the dehydration of (2R,3R)-2,3-dihydroxy-3-methylpentanoate (2,3-dihydroxy-3-methylvalerate) into 2-oxo-3-methylpentanoate (2-oxo-3-methylvalerate) and of (2R)-2,3-dihydroxy-3-methylbutanoate (2,3-dihydroxyisovalerate) into 2-oxo-3-methylbutanoate (2-oxoisovalerate), the penultimate precursor to L-isoleucine and L-valine, respectively. This chain is Dihydroxy-acid dehydratase, found in Chloroflexus aggregans (strain MD-66 / DSM 9485).